Reading from the N-terminus, the 63-residue chain is Period circadian protein (63 aa).

The disordered stretch occupies residues 1–63 (EGSGGSGSSG…VTLTESLLNK (63 aa)). Low complexity-rich tracts occupy residues 9–31 (SGNFTTGSNVRMSSVTNTSNAGT) and 39–49 (SAAASGASVNA). Over residues 54 to 63 (VTLTESLLNK) the composition is skewed to polar residues.

In terms of assembly, forms a heterodimer with timeless (TIM); the complex then translocates into the nucleus. Post-translationally, phosphorylated with a circadian rhythmicity, probably by the double-time protein (dbt). Phosphorylation could be implicated in the stability of per monomer and in the formation of heterodimer per-tim.

It localises to the nucleus. The protein resides in the cytoplasm. The protein localises to the perinuclear region. Functionally, essential for biological clock functions. Determines the period length of circadian and ultradian rhythms; an increase in PER dosage leads to shortened circadian rhythms and a decrease leads to lengthened circadian rhythms. Essential for the circadian rhythmicity of locomotor activity, eclosion behavior, and for the rhythmic component of the male courtship song that originates in the thoracic nervous system. The biological cycle depends on the rhythmic formation and nuclear localization of the TIM-PER complex. Light induces the degradation of TIM, which promotes elimination of PER. Nuclear activity of the heterodimer coordinatively regulates PER and TIM transcription through a negative feedback loop. Behaves as a negative element in circadian transcriptional loop. Does not appear to bind DNA, suggesting indirect transcriptional inhibition. The chain is Period circadian protein (per) from Drosophila immigrans (Fruit fly).